The primary structure comprises 213 residues: MKILLIGPPGSGKGSVSELLTKNNALKHVSTGNLFRAILKEDSELARKIKEINVSGGKLVPDEITNQVAKSAIDELIKNQQSFILDGYPRTINQALALEQYCDLDYIFYLDINHQELMKRLTGRWMCPKCAGIYNIHFKKPQVDGVCDNDQATLYQRADDHEDAVSIRLDEYDKLTLPLIKHYKTNPRFIKINANQPIKDVYEDINNYLKQNK.

Residue 10-15 (GSGKGS) coordinates ATP. An NMP region spans residues 30–60 (STGNLFRAILKEDSELARKIKEINVSGGKLV). Residues Thr-31, Arg-36, 58–60 (KLV), 87–90 (GYPR), and Gln-94 contribute to the AMP site. The LID stretch occupies residues 123–160 (GRWMCPKCAGIYNIHFKKPQVDGVCDNDQATLYQRADD). Arg-124 serves as a coordination point for ATP. Residues Cys-127 and Cys-130 each contribute to the Zn(2+) site. Residue 133–134 (IY) coordinates ATP. Positions 147 and 150 each coordinate Zn(2+). 2 residues coordinate AMP: Arg-157 and Arg-168. Gln-196 lines the ATP pocket.

This sequence belongs to the adenylate kinase family. In terms of assembly, monomer.

It is found in the cytoplasm. It carries out the reaction AMP + ATP = 2 ADP. Its pathway is purine metabolism; AMP biosynthesis via salvage pathway; AMP from ADP: step 1/1. Its function is as follows. Catalyzes the reversible transfer of the terminal phosphate group between ATP and AMP. Plays an important role in cellular energy homeostasis and in adenine nucleotide metabolism. This Ureaplasma urealyticum serovar 10 (strain ATCC 33699 / Western) protein is Adenylate kinase.